We begin with the raw amino-acid sequence, 328 residues long: uncharacterized protein (328 aa).

The H-T-H motif DNA-binding region spans 72-91 (ALQIRDKFNLQRVIIVPDGE).

The protein belongs to the SorC transcriptional regulatory family.

This is an uncharacterized protein from Escherichia coli (strain K12).